A 132-amino-acid chain; its full sequence is MSQDLVWSIIKKNNAFLKSSHGLTLSAEPGNLRNKNSLKYSGLARRTTIDVAAVNGKVVVSSKIVKKAAFPAQSKKTTTFSTVNTRKTARFVKTLATQYAPELRAAALGRLHRVQSALRSAKKAAARKAKKN.

Belongs to the eukaryotic ribosomal protein eL28 family.

The chain is Large ribosomal subunit protein eL28 (rpl28) from Dictyostelium discoideum (Social amoeba).